A 284-amino-acid polypeptide reads, in one-letter code: uncharacterized protein (284 aa).

Residues 9–28 (IILRWVVTLYIYGFILYQIT) form a helical membrane-spanning segment.

It is found in the membrane. This is an uncharacterized protein from Aquifex aeolicus (strain VF5).